A 274-amino-acid polypeptide reads, in one-letter code: Formamidopyrimidine-DNA glycosylase (274 aa).

The Schiff-base intermediate with DNA role is filled by P2. E3 functions as the Proton donor in the catalytic mechanism. K57 functions as the Proton donor; for beta-elimination activity in the catalytic mechanism. Residues H92, R111, and K152 each coordinate DNA. The FPG-type zinc-finger motif lies at 237–271 (QVYGRKGEECRECGTLIQAKVIGQRNSYFCPDCQP). R261 serves as the catalytic Proton donor; for delta-elimination activity.

It belongs to the FPG family. Monomer. Zn(2+) serves as cofactor.

It catalyses the reaction Hydrolysis of DNA containing ring-opened 7-methylguanine residues, releasing 2,6-diamino-4-hydroxy-5-(N-methyl)formamidopyrimidine.. It carries out the reaction 2'-deoxyribonucleotide-(2'-deoxyribose 5'-phosphate)-2'-deoxyribonucleotide-DNA = a 3'-end 2'-deoxyribonucleotide-(2,3-dehydro-2,3-deoxyribose 5'-phosphate)-DNA + a 5'-end 5'-phospho-2'-deoxyribonucleoside-DNA + H(+). Involved in base excision repair of DNA damaged by oxidation or by mutagenic agents. Acts as a DNA glycosylase that recognizes and removes damaged bases. Has a preference for oxidized purines, such as 7,8-dihydro-8-oxoguanine (8-oxoG). Has AP (apurinic/apyrimidinic) lyase activity and introduces nicks in the DNA strand. Cleaves the DNA backbone by beta-delta elimination to generate a single-strand break at the site of the removed base with both 3'- and 5'-phosphates. This Haemophilus ducreyi (strain 35000HP / ATCC 700724) protein is Formamidopyrimidine-DNA glycosylase.